Consider the following 288-residue polypeptide: Acetyl-coenzyme A carboxylase carboxyl transferase subunit beta (288 aa).

The 255-residue stretch at 34 to 288 folds into the CoA carboxyltransferase N-terminal domain; the sequence is LFAKCPACKH…HLVAFHGGGQ (255 aa). Residues Cys38, Cys41, Cys56, and Cys59 each coordinate Zn(2+). The segment at 38–59 adopts a C4-type zinc-finger fold; the sequence is CPACKHMIYKKDLGLAKICPTC.

The protein belongs to the AccD/PCCB family. Acetyl-CoA carboxylase is a heterohexamer composed of biotin carboxyl carrier protein (AccB), biotin carboxylase (AccC) and two subunits each of ACCase subunit alpha (AccA) and ACCase subunit beta (AccD). Requires Zn(2+) as cofactor.

Its subcellular location is the cytoplasm. It carries out the reaction N(6)-carboxybiotinyl-L-lysyl-[protein] + acetyl-CoA = N(6)-biotinyl-L-lysyl-[protein] + malonyl-CoA. The protein operates within lipid metabolism; malonyl-CoA biosynthesis; malonyl-CoA from acetyl-CoA: step 1/1. Component of the acetyl coenzyme A carboxylase (ACC) complex. Biotin carboxylase (BC) catalyzes the carboxylation of biotin on its carrier protein (BCCP) and then the CO(2) group is transferred by the transcarboxylase to acetyl-CoA to form malonyl-CoA. This Streptococcus pyogenes serotype M3 (strain ATCC BAA-595 / MGAS315) protein is Acetyl-coenzyme A carboxylase carboxyl transferase subunit beta.